Here is a 142-residue protein sequence, read N- to C-terminus: Small heat shock protein IbpB (142 aa).

One can recognise a sHSP domain in the interval 26–137 (SGESQSFPPY…APQRIAINER (112 aa)).

It belongs to the small heat shock protein (HSP20) family. In terms of assembly, homodimer. Forms homomultimers of about 100-150 subunits at optimal growth temperatures. Conformation changes to oligomers at high temperatures or high ionic concentrations. The decrease in size of the multimers is accompanied by an increase in chaperone activity.

The protein localises to the cytoplasm. Its function is as follows. Associates with aggregated proteins, together with IbpA, to stabilize and protect them from irreversible denaturation and extensive proteolysis during heat shock and oxidative stress. Aggregated proteins bound to the IbpAB complex are more efficiently refolded and reactivated by the ATP-dependent chaperone systems ClpB and DnaK/DnaJ/GrpE. Its activity is ATP-independent. The protein is Small heat shock protein IbpB of Salmonella newport (strain SL254).